The chain runs to 299 residues: Pantothenate synthetase (299 aa).

41-48 contributes to the ATP binding site; it reads MGALHEGH. Histidine 48 functions as the Proton donor in the catalytic mechanism. A (R)-pantoate-binding site is contributed by glutamine 72. Glutamine 72 contacts beta-alanine. Residue 158 to 161 coordinates ATP; it reads GQKD. Glutamine 164 lines the (R)-pantoate pocket. ATP is bound by residues valine 187 and 195 to 198; that span reads MSSR.

Belongs to the pantothenate synthetase family. In terms of assembly, homodimer.

It localises to the cytoplasm. It catalyses the reaction (R)-pantoate + beta-alanine + ATP = (R)-pantothenate + AMP + diphosphate + H(+). It participates in cofactor biosynthesis; (R)-pantothenate biosynthesis; (R)-pantothenate from (R)-pantoate and beta-alanine: step 1/1. Catalyzes the condensation of pantoate with beta-alanine in an ATP-dependent reaction via a pantoyl-adenylate intermediate. The polypeptide is Pantothenate synthetase (Acidobacterium capsulatum (strain ATCC 51196 / DSM 11244 / BCRC 80197 / JCM 7670 / NBRC 15755 / NCIMB 13165 / 161)).